Consider the following 111-residue polypeptide: Nucleoid-associated protein CYB_2894 (111 aa).

The protein belongs to the YbaB/EbfC family. As to quaternary structure, homodimer.

It is found in the cytoplasm. Its subcellular location is the nucleoid. Binds to DNA and alters its conformation. May be involved in regulation of gene expression, nucleoid organization and DNA protection. The chain is Nucleoid-associated protein CYB_2894 from Synechococcus sp. (strain JA-2-3B'a(2-13)) (Cyanobacteria bacterium Yellowstone B-Prime).